The chain runs to 1097 residues: DNA-directed RNA polymerase subunit beta (1097 aa).

The segment at 1072-1097 (QDVNPRRSTPSRPTYESLGVADYDED) is disordered.

This sequence belongs to the RNA polymerase beta chain family. In cyanobacteria the RNAP catalytic core is composed of 2 alpha, 1 beta, 1 beta', 1 gamma and 1 omega subunit. When a sigma factor is associated with the core the holoenzyme is formed, which can initiate transcription.

It carries out the reaction RNA(n) + a ribonucleoside 5'-triphosphate = RNA(n+1) + diphosphate. Functionally, DNA-dependent RNA polymerase catalyzes the transcription of DNA into RNA using the four ribonucleoside triphosphates as substrates. This Parasynechococcus marenigrum (strain WH8102) protein is DNA-directed RNA polymerase subunit beta.